We begin with the raw amino-acid sequence, 310 residues long: Mas-related G-protein coupled receptor member E (310 aa).

Residues 1 to 22 lie on the Extracellular side of the membrane; that stretch reads MTSLSVHTDSPSTQGEMAFNLT. A glycan (N-linked (GlcNAc...) asparagine) is linked at N20. Residues 23 to 43 form a helical membrane-spanning segment; that stretch reads ILSLTELLSLGGLLGNGVALW. Residues 44-60 lie on the Cytoplasmic side of the membrane; that stretch reads LLNQNVYRNPFSIYLLD. A helical membrane pass occupies residues 61–81; the sequence is VACADLIFLCCHMVAIIPELL. Residues 82–92 lie on the Extracellular side of the membrane; the sequence is QDQLNFPEFVH. The chain crosses the membrane as a helical span at residues 93 to 113; sequence ISLTMLRFFCYIVGLSLLAAI. Over 114–133 the chain is Cytoplasmic; sequence STEQCLATLFPAWYLCRRPR. Residues 134 to 154 form a helical membrane-spanning segment; it reads YLTTCVCALIWVLCLLLDLLL. Over 155-174 the chain is Extracellular; the sequence is SGACTQFFGAPSYHLCDMLW. Residues 175-195 traverse the membrane as a helical segment; it reads LVVAVLLAALCCTMCVTSLLL. Residues 196-213 lie on the Cytoplasmic side of the membrane; the sequence is LLRVERGPERHQPRGFPT. The chain crosses the membrane as a helical span at residues 214–234; sequence LVLLAVLLFLFCGLPFGIFWL. The Extracellular portion of the chain corresponds to 235–248; sequence SKNLSWHIPLYFYH. N237 carries N-linked (GlcNAc...) asparagine glycosylation. Residues 249–269 form a helical membrane-spanning segment; the sequence is FSFFMASVHSAAKPAIYFFLG. Residues 270-310 are Cytoplasmic-facing; that stretch reads STPGQRFREPLRLVLQRALGDEAELGAGREASQGGLVDMTV.

Belongs to the G-protein coupled receptor 1 family. Mas subfamily.

Its subcellular location is the cell membrane. Orphan receptor. May regulate nociceptor function and/or development, including the sensation or modulation of pain. The sequence is that of Mas-related G-protein coupled receptor member E (Mrgpre) from Mus musculus (Mouse).